We begin with the raw amino-acid sequence, 176 residues long: Translation initiation factor IF-3 (176 aa).

The protein belongs to the IF-3 family. As to quaternary structure, monomer.

It localises to the cytoplasm. Functionally, IF-3 binds to the 30S ribosomal subunit and shifts the equilibrium between 70S ribosomes and their 50S and 30S subunits in favor of the free subunits, thus enhancing the availability of 30S subunits on which protein synthesis initiation begins. The sequence is that of Translation initiation factor IF-3 from Streptococcus pyogenes serotype M4 (strain MGAS10750).